A 460-amino-acid chain; its full sequence is Phosphoglucomutase (460 aa).

Catalysis depends on serine 103, which acts as the Phosphoserine intermediate. Serine 103 contributes to the Mg(2+) binding site. Substrate contacts are provided by residues 103–104 and lysine 113; that span reads SH. Residues aspartate 239, aspartate 241, and aspartate 243 each contribute to the Mg(2+) site. Substrate contacts are provided by residues 243–244, threonine 303, and 322–324; these read DR and EMS.

The protein belongs to the phosphohexose mutase family. The cofactor is Mg(2+).

The protein localises to the cytoplasm. The enzyme catalyses alpha-D-glucose 1-phosphate = alpha-D-glucose 6-phosphate. This enzyme participates in both the breakdown and synthesis of glucose. The chain is Phosphoglucomutase (pgm) from Neisseria meningitidis serogroup B (strain ATCC BAA-335 / MC58).